Here is a 422-residue protein sequence, read N- to C-terminus: Enolase (422 aa).

(2R)-2-phosphoglycerate is bound at residue Gln163. Glu205 acts as the Proton donor in catalysis. Mg(2+) contacts are provided by Asp242, Glu283, and Asp310. Residues Lys335, Arg364, Ser365, and Lys386 each coordinate (2R)-2-phosphoglycerate. The active-site Proton acceptor is Lys335.

Belongs to the enolase family. Mg(2+) serves as cofactor.

It localises to the cytoplasm. It is found in the secreted. The protein localises to the cell surface. The catalysed reaction is (2R)-2-phosphoglycerate = phosphoenolpyruvate + H2O. It functions in the pathway carbohydrate degradation; glycolysis; pyruvate from D-glyceraldehyde 3-phosphate: step 4/5. Functionally, catalyzes the reversible conversion of 2-phosphoglycerate (2-PG) into phosphoenolpyruvate (PEP). It is essential for the degradation of carbohydrates via glycolysis. In Bdellovibrio bacteriovorus (strain ATCC 15356 / DSM 50701 / NCIMB 9529 / HD100), this protein is Enolase.